The chain runs to 74 residues: Anaphase-promoting complex subunit 13 (74 aa).

Residues 33 to 53 (LNELPEPEQDNGGTTESVKEQ) form a disordered region.

Belongs to the APC13 family. As to quaternary structure, the mammalian APC/C is composed at least of 14 distinct subunits ANAPC1, ANAPC2, CDC27/APC3, ANAPC4, ANAPC5, CDC16/APC6, ANAPC7, CDC23/APC8, ANAPC10, ANAPC11, CDC26/APC12, ANAPC13, ANAPC15 and ANAPC16 that assemble into a complex of at least 19 chains with a combined molecular mass of around 1.2 MDa; APC/C interacts with FZR1 and FBXO5.

Its subcellular location is the nucleus. The protein operates within protein modification; protein ubiquitination. In terms of biological role, component of the anaphase promoting complex/cyclosome (APC/C), a cell cycle-regulated E3 ubiquitin ligase that controls progression through mitosis and the G1 phase of the cell cycle. The APC/C complex acts by mediating ubiquitination and subsequent degradation of target proteins: it mainly mediates the formation of 'Lys-11'-linked polyubiquitin chains and, to a lower extent, the formation of 'Lys-48'- and 'Lys-63'-linked polyubiquitin chains. The APC/C complex catalyzes assembly of branched 'Lys-11'-/'Lys-48'-linked branched ubiquitin chains on target proteins. This is Anaphase-promoting complex subunit 13 (ANAPC13) from Bos taurus (Bovine).